Reading from the N-terminus, the 153-residue chain is UPF0735 ACT domain-containing protein FN1487 (153 aa).

The region spanning 76 to 152 is the ACT domain; the sequence is SLHLSLKDRV…GIADIRITGS (77 aa).

This sequence belongs to the UPF0735 family.

The chain is UPF0735 ACT domain-containing protein FN1487 from Fusobacterium nucleatum subsp. nucleatum (strain ATCC 25586 / DSM 15643 / BCRC 10681 / CIP 101130 / JCM 8532 / KCTC 2640 / LMG 13131 / VPI 4355).